The sequence spans 465 residues: UDP-N-acetylmuramate--L-alanine ligase (465 aa).

112-118 (GTHGKTT) serves as a coordination point for ATP.

It belongs to the MurCDEF family.

It is found in the cytoplasm. The catalysed reaction is UDP-N-acetyl-alpha-D-muramate + L-alanine + ATP = UDP-N-acetyl-alpha-D-muramoyl-L-alanine + ADP + phosphate + H(+). Its pathway is cell wall biogenesis; peptidoglycan biosynthesis. In terms of biological role, cell wall formation. In Burkholderia thailandensis (strain ATCC 700388 / DSM 13276 / CCUG 48851 / CIP 106301 / E264), this protein is UDP-N-acetylmuramate--L-alanine ligase.